A 340-amino-acid chain; its full sequence is tRNA-cytidine(32) 2-sulfurtransferase (340 aa).

The PP-loop motif motif lies at 74–79; it reads SGGKDS. Cys149, Cys152, and Cys240 together coordinate [4Fe-4S] cluster.

Belongs to the TtcA family. As to quaternary structure, homodimer. Mg(2+) serves as cofactor. The cofactor is [4Fe-4S] cluster.

It localises to the cytoplasm. The enzyme catalyses cytidine(32) in tRNA + S-sulfanyl-L-cysteinyl-[cysteine desulfurase] + AH2 + ATP = 2-thiocytidine(32) in tRNA + L-cysteinyl-[cysteine desulfurase] + A + AMP + diphosphate + H(+). Its pathway is tRNA modification. Functionally, catalyzes the ATP-dependent 2-thiolation of cytidine in position 32 of tRNA, to form 2-thiocytidine (s(2)C32). The sulfur atoms are provided by the cysteine/cysteine desulfurase (IscS) system. The protein is tRNA-cytidine(32) 2-sulfurtransferase of Burkholderia ambifaria (strain MC40-6).